Consider the following 241-residue polypeptide: Uridylate kinase (241 aa).

12-15 provides a ligand contact to ATP; it reads KLSG. An involved in allosteric activation by GTP region spans residues 20–25; sequence GATGYG. Glycine 54 serves as a coordination point for UMP. 2 residues coordinate ATP: glycine 55 and arginine 59. UMP is bound by residues aspartate 74 and 135-142; that span reads TGNPYMTT. Residues asparagine 163, tyrosine 169, and aspartate 172 each coordinate ATP.

This sequence belongs to the UMP kinase family. Homohexamer.

Its subcellular location is the cytoplasm. It catalyses the reaction UMP + ATP = UDP + ADP. It participates in pyrimidine metabolism; CTP biosynthesis via de novo pathway; UDP from UMP (UMPK route): step 1/1. Allosterically activated by GTP. Inhibited by UTP. In terms of biological role, catalyzes the reversible phosphorylation of UMP to UDP. The chain is Uridylate kinase from Dehalococcoides mccartyi (strain CBDB1).